The sequence spans 80 residues: Small ribosomal subunit protein bS16 (80 aa).

This sequence belongs to the bacterial ribosomal protein bS16 family.

This is Small ribosomal subunit protein bS16 from Wigglesworthia glossinidia brevipalpis.